The chain runs to 763 residues: ATP-dependent RNA helicase glh-1 (763 aa).

The disordered stretch occupies residues 1 to 30 (MSDGWSDSESAAKAKTGFGSGGGFGGGNNG). Over residues 18-30 (FGSGGGFGGGNNG) the composition is skewed to gly residues. Tandem repeats lie at residues 24-33 (FGGGNNGGSG), 34-43 (FGGGKNGGTG), 44-53 (FGGGNTGGSG), 54-63 (FGGGNTGGSG), 64-73 (FGGGKTGGSG), 74-83 (FGGGNTCGSG), and 84-93 (FGGGSTGGSP). The tract at residues 24–93 (FGGGNNGGSG…FGGGSTGGSP (70 aa)) is 7 X 10 AA tandem repeats, Gly-rich. 2 consecutive CCHC-type zinc fingers follow at residues 158–175 (NNCF…DCPE) and 183–200 (RVCY…ECTE). The interval 193–230 (HTSRECTEERKPREGRTGGFGGGAGFGNNGGNDGFGGD) is disordered. Basic and acidic residues predominate over residues 194-208 (TSRECTEERKPREGR). A compositionally biased stretch (gly residues) spans 209 to 230 (TGGFGGGAGFGNNGGNDGFGGD). 2 consecutive CCHC-type zinc fingers follow at residues 242 to 259 (MKCF…ECPE) and 262 to 279 (RGCF…ECPN). The short motif at 341–369 (KTFAEANLTETMQKNVAHAGYSKTTPIQQ) is the Q motif element. In terms of domain architecture, Helicase ATP-binding spans 372–556 (LPLVHQGYDI…RAFLRENYVM (185 aa)). 385-392 (AQTGSGKT) serves as a coordination point for ATP. Positions 423–427 (ILTPT) match the Phosphodegron motif. Residues 499 to 502 (DEAD) carry the DEAD box motif. A Helicase C-terminal domain is found at 592–739 (DIDSYTTEKS…IVPDWMQGAA (148 aa)).

Belongs to the DEAD box helicase family. DDX4/VASA subfamily. Interacts with csn-5; this may prevent glh-1 degradation induced by kgb-1. Interacts with zyx-1. Interacts (via the N-terminal region containing the four CCHC zinc fingers) with pan-1. Interacts with kgb-1; this may promote glh-1 degradation by the proteasome. Phosphorylated by kgb-1 (in vitro); this may be responsible for its degradation by the proteasome.

The protein resides in the cytoplasm. Its subcellular location is the cytoplasmic granule. It is found in the perinuclear region. The catalysed reaction is ATP + H2O = ADP + phosphate + H(+). Probable ATP-binding RNA helicase. May act redundantly with the P-granule component glh-4 to regulate the formation of the granular structure of P-granules in embryos. Plays a role in positively regulating the localization of pgl-1 to P-granules. May play a role in transgenerational epigenetic inheritance. May protect somatic cells from excessive apoptosis during normal development. This Caenorhabditis elegans protein is ATP-dependent RNA helicase glh-1.